The primary structure comprises 316 residues: MCISISQVSRLRIHSFGSSCCERVHGWIKNSSSLKLLDVRASSVDGKARWIRRNVSTTTQGSRSNTKSSVLGGTVPVTRIIDEESRTKVQPFGNLQQRLAQDKDLSKLLTVIVSDLETTGLHRKNERIIEIAAQDIAGGGYSTFQTLVNPGVVPITNAHIHGIRNDMVCRPEVPRMEELIPIFLRYVESRQKPGGYVMLVAHNGKSFDFQFLINEFNRCSYEIPHNWLLLDSLPLARENMKSVEPTVKLSSSLEALADYYSLTREGDAHRALSDVLLLSKVFQKLTIDLKLSLSDLVLRCHTASDISAAMAKNKKA.

A chloroplast and mitochondrion-targeting transit peptide spans 1 to 63; that stretch reads MCISISQVSR…NVSTTTQGSR (63 aa). Residues 112-282 form the Exonuclease domain; that stretch reads IVSDLETTGL…SDVLLLSKVF (171 aa). The Mg(2+) site is built by Asp115 and Glu117. His269 (proton donor/acceptor) is an active-site residue. Asp274 contributes to the Mg(2+) binding site.

The protein belongs to the exonuclease superfamily. TREX family. Requires Mg(2+) as cofactor. As to expression, highly expressed in mature pollen grains. Detected in flowers, senescing leaves and roots.

The protein resides in the plastid. Its subcellular location is the chloroplast. It is found in the mitochondrion. Its activity is regulated as follows. Inhibited by free nucleotide diphosphates (NDPs). Its function is as follows. Exonuclease required for organelle DNA degradation during pollen development. Plays non-essential roles in maternal inheritance. May be part of the DNA salvage machinery. This chain is Exonuclease DPD1, chloroplastic/mitochondrial, found in Arabidopsis thaliana (Mouse-ear cress).